The primary structure comprises 272 residues: 2-succinyl-6-hydroxy-2,4-cyclohexadiene-1-carboxylate synthase (272 aa).

Belongs to the AB hydrolase superfamily. MenH family. In terms of assembly, monomer.

The enzyme catalyses 5-enolpyruvoyl-6-hydroxy-2-succinyl-cyclohex-3-ene-1-carboxylate = (1R,6R)-6-hydroxy-2-succinyl-cyclohexa-2,4-diene-1-carboxylate + pyruvate. The protein operates within quinol/quinone metabolism; 1,4-dihydroxy-2-naphthoate biosynthesis; 1,4-dihydroxy-2-naphthoate from chorismate: step 3/7. It functions in the pathway quinol/quinone metabolism; menaquinone biosynthesis. Its function is as follows. Catalyzes a proton abstraction reaction that results in 2,5-elimination of pyruvate from 2-succinyl-5-enolpyruvyl-6-hydroxy-3-cyclohexene-1-carboxylate (SEPHCHC) and the formation of 2-succinyl-6-hydroxy-2,4-cyclohexadiene-1-carboxylate (SHCHC). The protein is 2-succinyl-6-hydroxy-2,4-cyclohexadiene-1-carboxylate synthase of Yersinia pseudotuberculosis serotype O:1b (strain IP 31758).